A 546-amino-acid chain; its full sequence is Immunoglobulin-like domain-containing receptor 1 (546 aa).

The N-terminal stretch at 1–23 is a signal peptide; it reads MAWPKLPAPWLLLCTWLPAGCLS. The region spanning 24-162 is the Ig-like V-type domain; that stretch reads LLVTVQHTER…TSGDPDKEVK (139 aa). The Extracellular segment spans residues 24 to 167; sequence LLVTVQHTER…DKEVKLIVLH (144 aa). Cysteines 45 and 145 form a disulfide. A helical membrane pass occupies residues 168–188; that stretch reads WLTVIFIILGALLLLLLIGVC. At 189–546 the chain is on the cytoplasmic side; the sequence is WCQCCPQYCC…SSHSGRSVVI (358 aa). Residues 399–546 form a disordered region; that stretch reads WSGRHRSSRL…SSHSGRSVVI (148 aa). Residues 442–457 are compositionally biased toward basic and acidic residues; sequence RCQERPRRPSPRESTQ. Residues 458 to 467 show a composition bias toward basic residues; it reads RHGRRRRHRS. Residues Ser499 and Ser501 each carry the phosphoserine modification. Over residues 527–539 the composition is skewed to basic and acidic residues; the sequence is GSVERRSEKDSSH.

Belongs to the immunoglobulin superfamily. LISCH7 family. Homooligomer. Interacts with MARVELD2 and OCLN; the interaction is required to recruit MARVELD2 to tricellular contacts. Interacts (via C-terminus) with TRA2A, TRA2B and SRSF1. Interacts with PLSCR1.

It is found in the cell membrane. It localises to the cell junction. The protein resides in the tight junction. The protein localises to the nucleus. Its subcellular location is the cytoplasm. Functionally, maintains epithelial barrier function by recruiting MARVELD2/tricellulin to tricellular tight junctions (tTJs). Crucial for normal hearing by maintaining the structural and functional integrity of tTJs, which are critical for the survival of auditory neurosensory HCs. Mediates fatty acids and lipoproteins-stimulated CCK/cholecystokinin secretion in the small intestine. In the inner ear, may regulate alternative pre-mRNA splicing via binding to TRA2A, TRA2B and SRSF1. This Pongo abelii (Sumatran orangutan) protein is Immunoglobulin-like domain-containing receptor 1 (ILDR1).